A 255-amino-acid polypeptide reads, in one-letter code: Large ribosomal subunit protein uL2 (255 aa).

Residues 211-235 (PHGGGNHQHVGHATTTKRDDPAGKK) are disordered.

It belongs to the universal ribosomal protein uL2 family.

In Dictyostelium discoideum (Social amoeba), this protein is Large ribosomal subunit protein uL2 (rpl8).